A 201-amino-acid polypeptide reads, in one-letter code: Adapter protein MecA 1 (201 aa).

Belongs to the MecA family. In terms of assembly, homodimer.

Functionally, enables the recognition and targeting of unfolded and aggregated proteins to the ClpC protease or to other proteins involved in proteolysis. Acts negatively in the development of competence by binding ComK and recruiting it to the ClpCP protease. When overexpressed, inhibits sporulation. Also involved in Spx degradation by ClpC. In Halalkalibacterium halodurans (strain ATCC BAA-125 / DSM 18197 / FERM 7344 / JCM 9153 / C-125) (Bacillus halodurans), this protein is Adapter protein MecA 1 (mecA1).